A 178-amino-acid polypeptide reads, in one-letter code: Inner membrane-spanning protein YciB (178 aa).

Transmembrane regions (helical) follow at residues 22-42 (IFVA…VSWL), 50-70 (MALF…ALHN), 76-96 (WKVT…HWFM), 121-141 (IAWA…AFWL), and 149-169 (FKVF…GIYI).

Belongs to the YciB family.

Its subcellular location is the cell inner membrane. Plays a role in cell envelope biogenesis, maintenance of cell envelope integrity and membrane homeostasis. In Erwinia tasmaniensis (strain DSM 17950 / CFBP 7177 / CIP 109463 / NCPPB 4357 / Et1/99), this protein is Inner membrane-spanning protein YciB.